The chain runs to 1349 residues: Serine-aspartate repeat-containing protein D (1349 aa).

An N-terminal signal peptide occupies residues 1–35 (MLNRENKTAITRKGMVSNRLNKFSIRKYTVGTASI). Residues 23–34 (FSIRKYTVGTAS) carry the YSIRK-G/S signaling motif motif. A ligand binding A region region spans residues 36–568 (LVGTTLIFGL…NNQSGGAGQE (533 aa)). A disordered region spans residues 54 to 185 (ESTNKELNEA…NKKVDAKTES (132 aa)). Composition is skewed to polar residues over residues 62 to 71 (EATTSASDNQ) and 94 to 108 (EMVS…SNGN). The segment covering 130 to 145 (KSDEQASPKSTNEDLN) has biased composition (basic and acidic residues). Polar residues-rich tracts occupy residues 146 to 155 (TKQTISNQEA) and 163 to 173 (NKSVVNVQPTN). Residues 174-183 (EENKKVDAKT) show a composition bias toward basic and acidic residues. 5 consecutive CNA-B domains span residues 569–680 (VYKI…IYKP), 681–791 (KYNL…YKTP), 792–901 (KYNL…FYKP), 902–1012 (TYNL…YKTP), and 1013–1123 (KYSL…EEDT). 3 disordered regions span residues 856–883 (FETP…TSTT), 972–992 (YTPT…GLTT), and 1081–1325 (AGLT…SNNA). 2 stretches are compositionally biased toward polar residues: residues 860–869 (SGYTPTQVGS) and 972–981 (YTPTSVTSGN). Composition is skewed to acidic residues over residues 1091-1101 (TEDDKDADGGE) and 1118-1288 (YFEE…DSDS). Positions 1312–1316 (LPETG) match the LPXTG sorting signal motif. Position 1315 is a pentaglycyl murein peptidoglycan amidated threonine (Thr1315). A propeptide spans 1316–1349 (GSENNGSNNATLFGGLFAALGSLLLFGRRKKQNK) (removed by sortase).

Belongs to the serine-aspartate repeat-containing protein (SDr) family. As to quaternary structure, interacts with host DSG1; this interaction increases S.aureus adherence to keratinocytes.

Its subcellular location is the secreted. The protein localises to the cell wall. In terms of biological role, cell surface-associated calcium-binding protein which plays an important role in adhesion and pathogenesis. Mediates interactions with components of the extracellular matrix such as host DSG1 to promote bacterial adhesion to host cells. Contributes to the resistance to killing by innate immune components such as neutrophils present in blood and thus attenuates bacterial clearance. This chain is Serine-aspartate repeat-containing protein D (sdrD), found in Staphylococcus aureus (strain NCTC 8325 / PS 47).